The sequence spans 612 residues: Autophagy-related protein 28 (612 aa).

Residues N44–S72 are disordered. Residues Y214–Q296 adopt a coiled-coil conformation.

Belongs to the ATG28 family. As to quaternary structure, interacts with ATG35.

Its subcellular location is the cytoplasm. It localises to the vacuole membrane. The protein localises to the cytoplasmic vesicle membrane. In terms of biological role, required for the autophagic degradation of peroxisomes called pexophagy, but not essential for general autophagy. Involved in resistance to elevated pH. The polypeptide is Autophagy-related protein 28 (ATG28) (Komagataella phaffii (strain GS115 / ATCC 20864) (Yeast)).